Consider the following 529-residue polypeptide: GTPase Obg (529 aa).

An Obg domain is found at 2 to 159 (ASFVDRVVLH…SDIVLELKSI (158 aa)). Positions 160 to 343 (ADIALVGFPS…LGFAMAEIVK (184 aa)) constitute an OBG-type G domain. Residues 166-173 (GFPSAGKS), 191-195 (FTTLI), 212-215 (DVPG), 295-298 (NKVD), and 324-326 (SAT) contribute to the GTP site. Positions 173 and 193 each coordinate Mg(2+). In terms of domain architecture, OCT spans 363–447 (PRAVNEAGFK…DDGVVFDWEP (85 aa)). Residues 466–502 (FADIGDRPTRGQKRDEQQERRDAKAAARAELEAERKA) are compositionally biased toward basic and acidic residues. Residues 466–529 (FADIGDRPTR…ESGLTTENEE (64 aa)) are disordered.

The protein belongs to the TRAFAC class OBG-HflX-like GTPase superfamily. OBG GTPase family. Monomer. The cofactor is Mg(2+).

Its subcellular location is the cytoplasm. Functionally, an essential GTPase which binds GTP, GDP and possibly (p)ppGpp with moderate affinity, with high nucleotide exchange rates and a fairly low GTP hydrolysis rate. Plays a role in control of the cell cycle, stress response, ribosome biogenesis and in those bacteria that undergo differentiation, in morphogenesis control. This Arthrobacter sp. (strain FB24) protein is GTPase Obg.